The primary structure comprises 623 residues: NAD-dependent malic enzyme 1, mitochondrial (623 aa).

The N-terminal 38 residues, 1-38 (MGIANKLRLSSSSLSRILHRRILYSSAVRSFTTSEGHR), are a transit peptide targeting the mitochondrion. Catalysis depends on tyrosine 143, which acts as the Proton donor. Arginine 196 contributes to the NAD(+) binding site. The Proton acceptor role is filled by lysine 214. A divalent metal cation contacts are provided by glutamate 285, aspartate 286, and aspartate 309. Residues aspartate 309 and asparagine 464 each contribute to the NAD(+) site.

The protein belongs to the malic enzymes family. In terms of assembly, homodimer. Heterodimer of two related subunits in NAD-MEH complex. Interacts with NAD-ME2. Mg(2+) serves as cofactor. Mn(2+) is required as a cofactor. As to expression, expressed in leaves, stems, flowers, and roots (at protein level).

It localises to the mitochondrion. The enzyme catalyses (S)-malate + NAD(+) = pyruvate + CO2 + NADH. Activated by oxaloacetate (OAA), 2-ketoglutarate, succinate and fumarate as homodimer and by OAA, 2-ketoglutarate, succinate, fumarate and coenzyme A (acetyl-CoA and CoA) as heterodimer NAD-MEH. In terms of biological role, involved in the regulation of sugars and amino acids metabolisms during the night period. The chain is NAD-dependent malic enzyme 1, mitochondrial (NAD-ME1) from Arabidopsis thaliana (Mouse-ear cress).